The chain runs to 246 residues: Probable septum site-determining protein MinC (246 aa).

Belongs to the MinC family. Interacts with MinD and FtsZ.

Its function is as follows. Cell division inhibitor that blocks the formation of polar Z ring septums. Rapidly oscillates between the poles of the cell to destabilize FtsZ filaments that have formed before they mature into polar Z rings. Prevents FtsZ polymerization. The polypeptide is Probable septum site-determining protein MinC (Pseudomonas savastanoi pv. phaseolicola (strain 1448A / Race 6) (Pseudomonas syringae pv. phaseolicola (strain 1448A / Race 6))).